A 430-amino-acid chain; its full sequence is UDP-N-acetylglucosamine 1-carboxyvinyltransferase (430 aa).

22-23 lines the phosphoenolpyruvate pocket; it reads KN. R102 contributes to the UDP-N-acetyl-alpha-D-glucosamine binding site. The Proton donor role is filled by C126. C126 carries the post-translational modification 2-(S-cysteinyl)pyruvic acid O-phosphothioketal. Residues 131–135, 172–175, D317, and I339 each bind UDP-N-acetyl-alpha-D-glucosamine; these read RPVDL and KVSV.

This sequence belongs to the EPSP synthase family. MurA subfamily.

It is found in the cytoplasm. The catalysed reaction is phosphoenolpyruvate + UDP-N-acetyl-alpha-D-glucosamine = UDP-N-acetyl-3-O-(1-carboxyvinyl)-alpha-D-glucosamine + phosphate. Its pathway is cell wall biogenesis; peptidoglycan biosynthesis. Cell wall formation. Adds enolpyruvyl to UDP-N-acetylglucosamine. The chain is UDP-N-acetylglucosamine 1-carboxyvinyltransferase from Rhizobium etli (strain CIAT 652).